A 136-amino-acid chain; its full sequence is uncharacterized protein (136 aa).

Residues 1 to 100 (MQSREPSGWR…PCSGGPDRPE (100 aa)) are disordered. The span at 66–75 (RLLRWHHRVP) shows a compositional bias: basic residues.

This is an uncharacterized protein from Homo sapiens (Human).